The sequence spans 448 residues: Phosphoglucosamine mutase (448 aa).

The active-site Phosphoserine intermediate is Ser-108. Mg(2+)-binding residues include Ser-108, Asp-247, Asp-249, and Asp-251. Position 108 is a phosphoserine (Ser-108).

This sequence belongs to the phosphohexose mutase family. Requires Mg(2+) as cofactor. Post-translationally, activated by phosphorylation.

It carries out the reaction alpha-D-glucosamine 1-phosphate = D-glucosamine 6-phosphate. Functionally, catalyzes the conversion of glucosamine-6-phosphate to glucosamine-1-phosphate. In Herminiimonas arsenicoxydans, this protein is Phosphoglucosamine mutase.